Reading from the N-terminus, the 173-residue chain is Alpha-crystallin A chain (173 aa).

N-acetylmethionine is present on Met1. The sHSP domain occupies 52–162 (LFRSVLESGI…SHSERPIPVS (111 aa)). Zn(2+)-binding residues include His100, Glu102, His107, and His154. Residues 142–173 (SGPKVPSNMDPSHSERPIPVSREEKPTSAPSS) are disordered. The span at 153–167 (SHSERPIPVSREEKP) shows a compositional bias: basic and acidic residues. Ser162 is a glycosylation site (O-linked (GlcNAc) serine).

It belongs to the small heat shock protein (HSP20) family. Heteropolymer composed of three CRYAA and one CRYAB subunits. Inter-subunit bridging via zinc ions enhances stability, which is crucial as there is no protein turn over in the lens. Can also form homodimers and homotetramers (dimers of dimers) which serve as the building blocks of homooligomers. Within homooligomers, the zinc-binding motif is created from residues of 3 different molecules. His-100 and Glu-102 from one molecule are ligands of the zinc ion, and His-107 and His-154 residues from additional molecules complete the site with tetrahedral coordination geometry.

The protein resides in the cytoplasm. It is found in the nucleus. Its function is as follows. Contributes to the transparency and refractive index of the lens. May act as a chaperone, preventing aggregation of various proteins under a wide range of stress conditions. The polypeptide is Alpha-crystallin A chain (CRYAA) (Gallus gallus (Chicken)).